The sequence spans 277 residues: Undecaprenyl-diphosphatase (277 aa).

Transmembrane regions (helical) follow at residues 85–105 (VNIV…AGAI), 109–129 (LFAP…ILWV), 188–208 (ATEF…VYSV), 218–238 (ADIP…FLCV), and 256–276 (YRIG…VVWA).

This sequence belongs to the UppP family.

Its subcellular location is the cell inner membrane. The enzyme catalyses di-trans,octa-cis-undecaprenyl diphosphate + H2O = di-trans,octa-cis-undecaprenyl phosphate + phosphate + H(+). Its function is as follows. Catalyzes the dephosphorylation of undecaprenyl diphosphate (UPP). Confers resistance to bacitracin. The sequence is that of Undecaprenyl-diphosphatase from Herminiimonas arsenicoxydans.